A 216-amino-acid polypeptide reads, in one-letter code: Pyrophosphatase PpaX (216 aa).

D9 (nucleophile) is an active-site residue.

This sequence belongs to the HAD-like hydrolase superfamily. PpaX family. Requires Mg(2+) as cofactor.

It catalyses the reaction diphosphate + H2O = 2 phosphate + H(+). Its function is as follows. Hydrolyzes pyrophosphate formed during P-Ser-HPr dephosphorylation by HPrK/P. Might play a role in controlling the intracellular pyrophosphate pool. The sequence is that of Pyrophosphatase PpaX from Bacillus thuringiensis (strain Al Hakam).